The chain runs to 519 residues: Exodeoxyribonuclease 7 large subunit (519 aa).

Residues 500-519 (VGRGKTRKPKEEPPAQGSLL) form a disordered region.

This sequence belongs to the XseA family. As to quaternary structure, heterooligomer composed of large and small subunits.

The protein localises to the cytoplasm. It catalyses the reaction Exonucleolytic cleavage in either 5'- to 3'- or 3'- to 5'-direction to yield nucleoside 5'-phosphates.. Its function is as follows. Bidirectionally degrades single-stranded DNA into large acid-insoluble oligonucleotides, which are then degraded further into small acid-soluble oligonucleotides. The chain is Exodeoxyribonuclease 7 large subunit from Cereibacter sphaeroides (strain ATCC 17023 / DSM 158 / JCM 6121 / CCUG 31486 / LMG 2827 / NBRC 12203 / NCIMB 8253 / ATH 2.4.1.) (Rhodobacter sphaeroides).